The primary structure comprises 35 residues: Anti-H(O) lectin 3 (35 aa).

It belongs to the leguminous lectin family. Homodimer. Post-translationally, highly glycosylated.

In terms of biological role, binds lactose or galactose. This Ulex europaeus (Furze) protein is Anti-H(O) lectin 3.